An 87-amino-acid polypeptide reads, in one-letter code: Cuticle protein 1 (87 aa).

The residue at position 1 (glutamine 1) is a Pyrrolidone carboxylic acid. Tandem repeats lie at residues 5-20, 43-58, and 71-86. Cystine bridges form between cysteine 14–cysteine 20, cysteine 52–cysteine 58, and cysteine 80–cysteine 86.

The sequence is that of Cuticle protein 1 from Blaberus craniifer (Death's head cockroach).